The primary structure comprises 570 residues: DNA polymerase/3'-5' exonuclease PolX (570 aa).

Residues 1 to 315 are DNA polymerase type-X; it reads MHKKDIIRLL…PLIPPEIRES (315 aa). A divalent metal cation is bound by residues aspartate 193, aspartate 195, and aspartate 240. The interval 333-570 is 3'-5' exonuclease; it reads QIKGDLHMHS…DVEAFLKRND (238 aa). Mn(2+)-binding residues include histidine 339, histidine 341, histidine 371, glutamate 410, histidine 437, histidine 465, aspartate 526, and histidine 528.

It in the N-terminal section; belongs to the DNA polymerase type-X family. This sequence in the C-terminal section; belongs to the PHP family. In terms of assembly, monomer. The cofactor is Mn(2+). Mg(2+) is required as a cofactor.

It catalyses the reaction DNA(n) + a 2'-deoxyribonucleoside 5'-triphosphate = DNA(n+1) + diphosphate. The enzyme catalyses Exonucleolytic cleavage in the 3'- to 5'-direction to yield nucleoside 5'-phosphates.. With respect to regulation, the polymerization activity is inhibited in the presence of 2'-3'-dideoxynucleoside 5'-triphosphate (ddNTP). In terms of biological role, strictly DNA-template-directed DNA polymerase, preferentially acting on DNA structures containing gaps from one to a few nucleotides and bearing a phosphate group at the 5' end of the downstream DNA. The fact that PolX is able to conduct filling of a single-nucleotide gap, allowing further sealing of the resulting nick by a DNA ligase, points to a putative role in base excision repair (BER) during the B.subtilis life cycle. Moreover, also possesses a 3'-5' exonuclease activity able to edit unpaired 3'-termini in a gapped DNA substrate and likely involved in resecting unannealed 3'-termini during DNA repair. The same PolX molecule could perform the subsequent gap-filling step. Does not display 5'-deoxyribose 5'-phosphate (dRP) lyase activity, as predicted by the lack of the lysine and tyrosine residues responsible for the dRP lyase activity in some other PolX members. The protein is DNA polymerase/3'-5' exonuclease PolX (polX) of Bacillus subtilis (strain 168).